The following is a 144-amino-acid chain: Cell division protein SepF (144 aa).

Residues 16–42 (DEMNEAPYTEAEQQEEEVPQAQKNERR) form a disordered region.

Belongs to the SepF family. Homodimer. Interacts with FtsZ.

It localises to the cytoplasm. Functionally, cell division protein that is part of the divisome complex and is recruited early to the Z-ring. Probably stimulates Z-ring formation, perhaps through the cross-linking of FtsZ protofilaments. Its function overlaps with FtsA. The chain is Cell division protein SepF from Lactobacillus gasseri (strain ATCC 33323 / DSM 20243 / BCRC 14619 / CIP 102991 / JCM 1131 / KCTC 3163 / NCIMB 11718 / NCTC 13722 / AM63).